Reading from the N-terminus, the 564-residue chain is Kelch repeat and BTB domain-containing protein 1 (564 aa).

The BTB domain maps to 21–88 (CDIDIVINDE…IYGIPLSLTN (68 aa)). The BACK domain occupies 123–219 (CIDFYIYADK…SLLSPQVIKS (97 aa)). 6 Kelch repeats span residues 252 to 297 (IELI…VLDN), 298 to 346 (IIYM…ADDE), 347 to 395 (YIYC…MLNG), 397 to 441 (IYVI…VHAG), 442 to 492 (KIYI…SVHN), and 494 to 539 (LYVG…CEPI).

In terms of assembly, interacts (via BTB domain) with host CUL3.

The protein resides in the host cytoplasm. Functionally, probable substrate-specific adapter of CUL3-containing E3 ubiquitin-protein ligases which mediate the ubiquitination and subsequent proteasomal degradation of host target proteins. The chain is Kelch repeat and BTB domain-containing protein 1 (KBTB1) from Camelus.